The sequence spans 248 residues: Granzyme-like protein 1 (248 aa).

Positions 1–18 (MNLLLLLLTVSLAPTTEA) are cleaved as a signal peptide. Positions 19–20 (AE) are cleaved as a propeptide — activation peptide. A Peptidase S1 domain is found at 21-246 (IIGGHEADPH…FLSWIEETMK (226 aa)). C50 and C66 are joined by a disulfide. H65 functions as the Charge relay system in the catalytic mechanism. N72 is a glycosylation site (N-linked (GlcNAc...) asparagine). D109 serves as the catalytic Charge relay system. 2 disulfide bridges follow: C143-C210 and C174-C189. The active-site Charge relay system is the S204.

It belongs to the peptidase S1 family. Granzyme subfamily. As to expression, duodenum.

This enzyme is necessary for target cell lysis in cell-mediated immune responses. This is Granzyme-like protein 1 from Rattus norvegicus (Rat).